Here is a 461-residue protein sequence, read N- to C-terminus: GTPase Der (461 aa).

2 consecutive EngA-type G domains span residues 2–164 (QSII…NENF) and 197–369 (IKVG…ANFT). GTP contacts are provided by residues 8 to 15 (GKPNVGKS), 55 to 59 (DSGGL), 116 to 119 (NKID), 203 to 210 (GRVNVGKS), 250 to 254 (DTAGI), and 314 to 317 (NKWD). One can recognise a KH-like domain in the interval 370–454 (QKIPTAKLNA…PLIIVSRKKG (85 aa)).

It belongs to the TRAFAC class TrmE-Era-EngA-EngB-Septin-like GTPase superfamily. EngA (Der) GTPase family. As to quaternary structure, associates with the 50S ribosomal subunit.

GTPase that plays an essential role in the late steps of ribosome biogenesis. This Campylobacter lari (strain RM2100 / D67 / ATCC BAA-1060) protein is GTPase Der.